Here is a 662-residue protein sequence, read N- to C-terminus: DNA helicase/primase complex-associated protein (662 aa).

This sequence belongs to the herpesviridae HEPA family. As to quaternary structure, associates with the primase and the helicase to form the helicase-primase complex. Interacts with the origin-binding protein. Interacts with the polymerase catalytic subunit.

It is found in the host nucleus. Functionally, component of the helicase/primase complex. Unwinds the DNA at the replication forks and generates single-stranded DNA for both leading and lagging strand synthesis. The primase synthesizes short RNA primers on the lagging strand that the polymerase presumably elongates using dNTPs. The primase-associated factor has no known catalytic activity in the complex and may serve to facilitate the formation of the replisome by directly interacting with the origin-binding protein and the polymerase. In Human herpesvirus 6B (strain Z29) (HHV-6 variant B), this protein is DNA helicase/primase complex-associated protein (U74).